Consider the following 86-residue polypeptide: Actinorhodin polyketide synthase acyl carrier protein (86 aa).

One can recognise a Carrier domain in the interval 4 to 82; sequence LLTTDDLRRA…ELLDLINGAL (79 aa). Ser-42 is subject to O-(pantetheine 4'-phosphoryl)serine.

4'-phosphopantetheine is transferred from CoA to a specific serine of the apo-ACP-like protein.

It functions in the pathway antibiotic biosynthesis; actinorhodin biosynthesis. Acyl carrier protein. The chain is Actinorhodin polyketide synthase acyl carrier protein from Streptomyces coelicolor (strain ATCC BAA-471 / A3(2) / M145).